We begin with the raw amino-acid sequence, 599 residues long: Retrotransposon Gag-like protein 5 (599 aa).

Disordered stretches follow at residues 77-97 (DPTPEEEEEEEEEVPFLCWPP), 116-139 (DYTNPDGSSDPPLSPSPSQPELHS), and 377-450 (FPQE…EEDE). Residues 78–90 (PTPEEEEEEEEEV) show a composition bias toward acidic residues. Acidic residues-rich tracts occupy residues 393 to 432 (DEMEDEEDEDEDEDYEFEEEDEDDDDEEEEEEEEEEEDKE) and 439 to 450 (DSDENKYEEEDE).

The sequence is that of Retrotransposon Gag-like protein 5 from Mus musculus (Mouse).